The chain runs to 156 residues: Lipoprotein signal peptidase (156 aa).

A run of 3 helical transmembrane segments spans residues 5 to 25 (FKFI…DQWV), 64 to 84 (YLHL…KTLL), and 89 to 109 (IAFG…FIYG). Residues Asp-113 and Asp-130 contribute to the active site. Residues 122 to 142 (NFAIFNVADVMINISVALILI) form a helical membrane-spanning segment.

It belongs to the peptidase A8 family.

The protein resides in the cell inner membrane. The enzyme catalyses Release of signal peptides from bacterial membrane prolipoproteins. Hydrolyzes -Xaa-Yaa-Zaa-|-(S,diacylglyceryl)Cys-, in which Xaa is hydrophobic (preferably Leu), and Yaa (Ala or Ser) and Zaa (Gly or Ala) have small, neutral side chains.. It functions in the pathway protein modification; lipoprotein biosynthesis (signal peptide cleavage). Functionally, this protein specifically catalyzes the removal of signal peptides from prolipoproteins. The polypeptide is Lipoprotein signal peptidase (Campylobacter jejuni subsp. doylei (strain ATCC BAA-1458 / RM4099 / 269.97)).